The sequence spans 172 residues: Large ribosomal subunit protein uL10 (172 aa).

Belongs to the universal ribosomal protein uL10 family. As to quaternary structure, part of the ribosomal stalk of the 50S ribosomal subunit. The N-terminus interacts with L11 and the large rRNA to form the base of the stalk. The C-terminus forms an elongated spine to which L12 dimers bind in a sequential fashion forming a multimeric L10(L12)X complex.

Its function is as follows. Forms part of the ribosomal stalk, playing a central role in the interaction of the ribosome with GTP-bound translation factors. The polypeptide is Large ribosomal subunit protein uL10 (Nitrobacter hamburgensis (strain DSM 10229 / NCIMB 13809 / X14)).